The following is a 734-amino-acid chain: Methylcrotonoyl-CoA carboxylase subunit alpha, mitochondrial (734 aa).

The transit peptide at M1–I25 directs the protein to the mitochondrion. One can recognise a Biotin carboxylation domain in the interval C37–S484. ATP-binding residues include K152, E236, and H271. The ATP-grasp domain maps to K156–N354. Residues E311, E325, and N327 each coordinate Mn(2+). The active site involves R329. Residue S645 is modified to Phosphoserine. Residues S645–T666 form a disordered region. The region spanning S657–K733 is the Biotinyl-binding domain. N6-biotinyllysine is present on K699.

Probably a heterodimer composed of biotin-containing alpha subunits and beta subunits. It depends on biotin as a cofactor. The cofactor is Mn(2+). As to expression, in roots, cotyledons, leaves, flowers, ovaries, siliques and embryos.

The protein resides in the mitochondrion matrix. The enzyme catalyses 3-methylbut-2-enoyl-CoA + hydrogencarbonate + ATP = 3-methyl-(2E)-glutaconyl-CoA + ADP + phosphate + H(+). It participates in amino-acid degradation; L-leucine degradation; (S)-3-hydroxy-3-methylglutaryl-CoA from 3-isovaleryl-CoA: step 2/3. Its function is as follows. Biotin-attachment subunit of the 3-methylcrotonyl-CoA carboxylase, an enzyme that catalyzes the conversion of 3-methylcrotonyl-CoA to 3-methylglutaconyl-CoA, a critical step for leucine and isovaleric acid catabolism. This is Methylcrotonoyl-CoA carboxylase subunit alpha, mitochondrial (MCCA) from Arabidopsis thaliana (Mouse-ear cress).